The sequence spans 245 residues: Probable septum site-determining protein MinC (245 aa).

The span at 113 to 132 (RERPLEPLVGEEKKKPEKPP) shows a compositional bias: basic and acidic residues. Residues 113–138 (RERPLEPLVGEEKKKPEKPPEPTIKP) are disordered.

It belongs to the MinC family. As to quaternary structure, interacts with MinD and FtsZ.

Cell division inhibitor that blocks the formation of polar Z ring septums. Rapidly oscillates between the poles of the cell to destabilize FtsZ filaments that have formed before they mature into polar Z rings. Prevents FtsZ polymerization. In Pseudomonas fluorescens (strain SBW25), this protein is Probable septum site-determining protein MinC.